We begin with the raw amino-acid sequence, 536 residues long: ADP,ATP carrier protein 4 (536 aa).

9 helical membrane passes run V44 to L64, S77 to V97, M109 to W129, T172 to A194, K205 to T225, F244 to F264, V309 to L329, A349 to I369, and A378 to F398. N-linked (GlcNAc...) asparagine glycosylation is found at N400 and N421. Helical transmembrane passes span L465–F485 and V493–L513.

Belongs to the ADP/ATP translocase tlc family.

It localises to the cell membrane. Functionally, ATP transporter involved in the uptake of ATP from the host cell cytoplasm. Provides the microsporidian cell with host ATP in exchange for ADP. This is an obligate exchange system. This energy acquiring activity is an important component of microsporidian parasitism. The polypeptide is ADP,ATP carrier protein 4 (NTT4) (Encephalitozoon cuniculi (strain GB-M1) (Microsporidian parasite)).